A 497-amino-acid polypeptide reads, in one-letter code: METKLPPASTPTSPSSPGLSPVPPPDKVDGFSRRSLRRARPRRSHSSSQFRYQSNQQELTPLPLLKDVPASELHELLSRKLAQCGVMFDFLDCVADLKGKEVKRAALNELVECVGSTRGVLIEPVYPDIIRMISVNIFRTLPPSENPEFDPEEDEPNLEPSWPHLQLVYEFFLRFLESPDFQPSVAKRYVDQKFVLMLLELFDSEDPREREYLKTILHRVYGKFLGLRAYIRKQCNHIFLRFIYELEHFNGVAELLEILGSIINGFALPLKTEHKQFLVRVLIPLHSVKSLSVFHAQLAYCVVQFLEKDATLTEHVIRGLLKYWPKTCTQKEVMFLGEMEEILDVIEPSQFVKIQEPLFKQVARCVSSPHFQVAERALYFWNNEYILSLIEDNCHTVLPAVFGTLYQVSKEHWNQTIVSLIYNVLKTFMEMNGKLFDELTASYKLEKQQEQQKAQERQELWRGLEELRLRRLQGTQGAKEAPVPRPTPQVAASGGQS.

Over residues 1 to 19 the composition is skewed to low complexity; that stretch reads METKLPPASTPTSPSSPGL. Disordered regions lie at residues 1-55 and 473-497; these read METK…YQSN and QGTQ…GGQS. S32, S35, S44, S46, S47, and S48 each carry phosphoserine. Residues 34–45 are compositionally biased toward basic residues; the sequence is RSLRRARPRRSH.

The protein belongs to the phosphatase 2A regulatory subunit B56 family. In terms of assembly, component of the serine/threonine-protein phosphatase 2A complex (PP2A). This complex consists of a common heterodimeric core enzyme, composed of a 36 kDa catalytic subunit (subunit C) and a 65 kDa constant scaffold subunit (PR65 or subunit A), that associates with a variety of regulatory subunits. Proteins that associate with the core dimer include three families of regulatory subunits B (the R2/B/PR55/B55, R3/B''/PR72/PR130/PR59 and R5/B'/B56 families), the 48 kDa variable regulatory subunit, viral proteins, and cell signaling molecules. Interacts with SGO1. Interacts with AKT1. Post-translationally, ubiquitinated by CUL3-KLHL15 complex; this modification leads to proteasomal degradation. Widely expressed at the mRNA level, with highest levels in cerebellum and lung.

The protein localises to the cytoplasm. As the regulatory component of the serine/threonine-protein phosphatase 2A (PP2A) holoenzyme, modulates substrate specificity, subcellular localization, and responsiveness to phosphorylation. The phosphorylated form mediates the interaction between PP2A and AKT1, leading to AKT1 dephosphorylation. This Rattus norvegicus (Rat) protein is Serine/threonine-protein phosphatase 2A 56 kDa regulatory subunit beta isoform (Ppp2r5b).